The chain runs to 1946 residues: Sickle tail protein (1946 aa).

2 disordered regions span residues 1-83 (MEES…GMQP) and 113-176 (ERLR…VRSA). Positions 18 to 36 (DSRQMPQQGRSNLHVTSQE) are enriched in polar residues. The span at 38–47 (AACRRPRERL) shows a compositional bias: basic and acidic residues. Ser-169 is modified (phosphoserine). A Phosphotyrosine modification is found at Tyr-244. Disordered stretches follow at residues 305–324 (HPPH…HSLP) and 339–374 (AIPG…RDVK). Positions 308–324 (HVIPNSPPSTPVPHSLP) are enriched in pro residues. Low complexity predominate over residues 352–367 (SSLPVSRSISPSPSAI). O-linked (GlcNAc) serine glycosylation occurs at Ser-357. Phosphoserine occurs at positions 361 and 365. A Phosphotyrosine modification is found at Tyr-393. The segment at 455–512 (SRKYPDSHLPTLGSKTPPASPHRVGDLRMIDLHPHLNTHGPPHTLQPDRASPSRQSFK) is disordered. Thr-470 carries the phosphothreonine modification. A Phosphoserine modification is found at Ser-474. A compositionally biased stretch (basic and acidic residues) spans 477 to 488 (RVGDLRMIDLHP). 2 coiled-coil regions span residues 557–581 (RETR…QSAL) and 644–685 (TSLL…ELEI). Ser-809 is modified (phosphoserine). 2 disordered regions span residues 853 to 875 (EETA…DVKS) and 891 to 947 (SPVV…PVNG). 2 stretches are compositionally biased toward polar residues: residues 891 to 909 (SPVV…NPAQ) and 927 to 947 (QEVT…PVNG). Positions 962-990 (SAKNRAVSIEKAEKKWEEKRQNLEHYNGK) form a coiled coil. A disordered region spans residues 1008-1221 (PNLEMPPASS…LRPSGPPKWE (214 aa)). 4 positions are modified to phosphoserine: Ser-1032, Ser-1035, Ser-1038, and Ser-1049. The span at 1049-1058 (SPPPPPPPPR) shows a compositional bias: pro residues. A compositionally biased stretch (polar residues) spans 1151–1162 (NPNSHAEQSRAN). Basic and acidic residues predominate over residues 1176 to 1194 (PKEKKNLEFYHEDVRKSDV). Ser-1466 is subject to Phosphoserine. The stretch at 1469 to 1495 (FEECDEELERMLTEEKIEEEEEDENED) forms a coiled coil. Disordered stretches follow at residues 1482 to 1567 (EEKI…VDDQ), 1622 to 1664 (AKRF…RKST), and 1691 to 1946 (VDTS…KETS). Acidic residues predominate over residues 1484–1495 (KIEEEEEDENED). Residues 1498–1508 (VRTSSQMSCEQ) are compositionally biased toward polar residues. 2 stretches are compositionally biased toward basic and acidic residues: residues 1509 to 1518 (VDSRSDRMGQ) and 1622 to 1644 (AKRF…RRQE). Residues 1659 to 1688 (EIRKSTYRTLDSLEQTIKQLENTISEMSPR) are a coiled coil. Residues 1739–1759 (KGSSTTPQTSRMPVPMTSKNR) show a composition bias toward polar residues. Position 1741 is a phosphoserine (Ser-1741). Positions 1765-1777 (KASKQSKLQDPRQ) are enriched in basic and acidic residues. Positions 1806 to 1825 (ALSPSSGKSSSLPSASGDSS) are enriched in low complexity. A Phosphoserine modification is found at Ser-1843. The segment covering 1851-1866 (HSASLIPSVSNGSLKF) has biased composition (polar residues). Positions 1890 to 1899 (AAPTTSSSSS) are enriched in low complexity. A phosphoserine mark is found at Ser-1899, Ser-1902, and Ser-1905. Polar residues predominate over residues 1920–1946 (HTPSLASYKAQNGSSSKATPSTAKETS).

Interacts with CPNE4 (via VWFA domain). In terms of tissue distribution, expressed predominantly in the notochord and mesonephros during embryogenesis as well as in other areas such as the epithalamus sulcus, lens vesicle, inner retinal layer, heart, hepatic primordial surface, infundibulum, surface ectoderm, hind gut and limb bud mesenchyme. In adults, expressed in a range of tissues including the nucleus pulposus, corpus callosum, kidney, cardiac muscle, Sertoli cells and hair follicles.

The protein resides in the cytoplasm. It localises to the cytoskeleton. It is found in the microtubule organizing center. The protein localises to the centrosome. Required for normal development of intervertebral disks. In Mus musculus (Mouse), this protein is Sickle tail protein.